A 285-amino-acid polypeptide reads, in one-letter code: 3-methyl-2-oxobutanoate hydroxymethyltransferase (285 aa).

Residues 1 to 22 form a disordered region; the sequence is MSEHNVYGAAQPAQPGQPAQPR. Low complexity predominate over residues 8–21; that stretch reads GAAQPAQPGQPAQP. Residues D66 and D105 each coordinate Mg(2+). 3-methyl-2-oxobutanoate contacts are provided by residues 66 to 67, D105, and K135; that span reads DS. E137 is a binding site for Mg(2+). E203 serves as the catalytic Proton acceptor.

The protein belongs to the PanB family. In terms of assembly, homodecamer; pentamer of dimers. Requires Mg(2+) as cofactor.

It is found in the cytoplasm. It carries out the reaction 3-methyl-2-oxobutanoate + (6R)-5,10-methylene-5,6,7,8-tetrahydrofolate + H2O = 2-dehydropantoate + (6S)-5,6,7,8-tetrahydrofolate. It functions in the pathway cofactor biosynthesis; (R)-pantothenate biosynthesis; (R)-pantoate from 3-methyl-2-oxobutanoate: step 1/2. Functionally, catalyzes the reversible reaction in which hydroxymethyl group from 5,10-methylenetetrahydrofolate is transferred onto alpha-ketoisovalerate to form ketopantoate. The protein is 3-methyl-2-oxobutanoate hydroxymethyltransferase of Mycolicibacterium paratuberculosis (strain ATCC BAA-968 / K-10) (Mycobacterium paratuberculosis).